We begin with the raw amino-acid sequence, 1603 residues long: Vitellogenin-4 (1603 aa).

The signal sequence occupies residues 1–15; sequence MKSIIIASLVALAIA. One can recognise a Vitellogenin domain in the interval 24 to 685; it reads FSPKSEYVYK…EKNAFLPKEV (662 aa). Asparagine 1266 is a glycosylation site (N-linked (GlcNAc...) asparagine). Positions 1306–1475 constitute a VWFD domain; that stretch reads ATCKVDQSEV…SYLLKNEECE (170 aa). Cystine bridges form between cysteine 1308–cysteine 1438 and cysteine 1330–cysteine 1474.

In terms of tissue distribution, expressed in the intestine of adult hermaphrodites.

Its subcellular location is the secreted. Precursor of the egg-yolk proteins that are sources of nutrients during embryonic development. Together with other vitellogenins, may play a role in modulating life-span, acting via induction of autophagy and lysosomal lipolysis. This chain is Vitellogenin-4 (vit-4), found in Caenorhabditis elegans.